We begin with the raw amino-acid sequence, 115 residues long: Large ribosomal subunit protein uL18 (115 aa).

Belongs to the universal ribosomal protein uL18 family. Part of the 50S ribosomal subunit; part of the 5S rRNA/L5/L18/L25 subcomplex. Contacts the 5S and 23S rRNAs.

Functionally, this is one of the proteins that bind and probably mediate the attachment of the 5S RNA into the large ribosomal subunit, where it forms part of the central protuberance. The chain is Large ribosomal subunit protein uL18 from Ruthia magnifica subsp. Calyptogena magnifica.